The following is a 252-amino-acid chain: 5'-nucleotidase SurE (252 aa).

The a divalent metal cation site is built by D8, D9, S39, and N95.

The protein belongs to the SurE nucleotidase family. A divalent metal cation is required as a cofactor.

Its subcellular location is the cytoplasm. It catalyses the reaction a ribonucleoside 5'-phosphate + H2O = a ribonucleoside + phosphate. Functionally, nucleotidase that shows phosphatase activity on nucleoside 5'-monophosphates. The sequence is that of 5'-nucleotidase SurE from Clostridium botulinum (strain ATCC 19397 / Type A).